The chain runs to 172 residues: Large ribosomal subunit protein uL22y (172 aa).

This sequence belongs to the universal ribosomal protein uL22 family.

The chain is Large ribosomal subunit protein uL22y from Hordeum vulgare (Barley).